Here is a 375-residue protein sequence, read N- to C-terminus: MSKEKCSLTGGKEKRGELVRSLAWQHLVKQEEEEAVKKEEKEEGEDEEEEGSDSSSDDPNPEPPCMHPDLLELVVDREKCRKIRRQYRQLIYTVQQNREDIVNTASDTLSEALEEANVLFDGVSRTREAALDAQFLVLASDLGKEKAKQLNTDMNFFNPIAFCDLLLLFVGFNWVEEECKEFSDCDDSIVLSFWGMLHEEATSWMLQAETFHFIFGSFKAERSARKPRLGCHKRACKMEGSGDMPTKLRRLDVHANQETTEKEVERILGLLQTYFQKYPDTPVSYFEFVIDPNSFSRTVENIFYVSFIIRDGFARIRLDQDRLPILEPTNVSQVDDESDSYSYCRKQGVISLSLQDWKNIVSTFEISEAMIKNSY.

The stretch at alanine 23–glycine 51 forms a coiled coil. The tract at residues glutamine 30–proline 68 is disordered. Over residues glutamate 42–asparagine 60 the composition is skewed to acidic residues.

This sequence belongs to the NSE4 family. Component of the SMC5-SMC6 complex which consists at least of SMC5, SMC6, NSMCE2, NSMCE1, NSMCE4A or EID3 and NSMCE3; EID3 seems to be a testis-specific subunit. NSMCE1, NSMCE4A or EID3 and NSMCE3 probably form a subcomplex that bridges the head domains of the SMC5:SMC6 heterodimer. Homodimer, and heterodimer with EID2. Interacts with the C-terminal region of CREBBP.

It is found in the nucleus. Its subcellular location is the cytoplasm. It localises to the chromosome. The protein resides in the telomere. Its function is as follows. Tissue-specific component of the SMC5-SMC6 complex, a complex involved in repair of DNA double-strand breaks by homologous recombination. The complex may promote sister chromatid homologous recombination by recruiting the SMC1-SMC3 cohesin complex to double-strand breaks. The complex is required for telomere maintenance via recombination and mediates sumoylation of shelterin complex (telosome) components. Functionally, acts as a repressor of nuclear receptor-dependent transcription possibly by interfering with CREBBP-dependent coactivation. May function as a coinhibitor of other CREBBP/EP300-dependent transcription factors. The polypeptide is EP300-interacting inhibitor of differentiation 3 (Mus musculus (Mouse)).